The primary structure comprises 303 residues: Trans-enoyl reductase tazE (303 aa).

The interval 1 to 26 is disordered; the sequence is MTAEHDAAILPKPGGPLAVGKRATPE. 44-49 provides a ligand contact to NADP(+); it reads CDYYQR. 136–143 is a binding site for substrate; the sequence is LAVLTALT. NADP(+) contacts are provided by residues 170 to 173, 193 to 196, tyrosine 211, and 246 to 247; these read SSSV, SPKH, and LD. A substrate-binding site is contributed by 265–269; sequence VLPEC.

The protein belongs to the zinc-containing alcohol dehydrogenase family.

It functions in the pathway secondary metabolite biosynthesis. Its function is as follows. Trans-enoyl reductase; part of the gene cluster that mediates the biosynthesis of azaterrilone A and other azaphilones, a class of fungal metabolites characterized by a highly oxygenated pyrano-quinone bicyclic core and exhibiting a broad range of bioactivities. The first step of the pathway begins with the non-reducing polyketide synthase tazA that assembles one acetyl-CoA starter unit, five malonyl-CoA units, and catalyzes a series of Claisen condensations, methylation, PT-mediated cyclization, and finally releases the first hexaketide precursor through the R-domain. The tazA product then undergoes reduction on its terminal ketone and the following pyran-ring formation by yet undetermined enzyme(s). Dehydration and enoyl reduction, possibly involving the trans-enoyl reductase tazE leads to the next intermediate. TazD is predicted as an acetyltransferase and might catalyze the acetylation steps leading to the synthesis of azaterrilone A. Azaterrilone A is not the final product of the taz pathway and both the highly reducing polyketide synthase tazB and the dual enzyme tazHJ catalyze late steps of the pathway, leading to the production of the 2 final stereoisomers that contain additional polyketide modification whose structures have still to be determined. The protein is Trans-enoyl reductase tazE of Aspergillus terreus (strain NIH 2624 / FGSC A1156).